Consider the following 211-residue polypeptide: N-(5'-phosphoribosyl)anthranilate isomerase (211 aa).

The protein belongs to the TrpF family.

The catalysed reaction is N-(5-phospho-beta-D-ribosyl)anthranilate = 1-(2-carboxyphenylamino)-1-deoxy-D-ribulose 5-phosphate. It participates in amino-acid biosynthesis; L-tryptophan biosynthesis; L-tryptophan from chorismate: step 3/5. The polypeptide is N-(5'-phosphoribosyl)anthranilate isomerase (Pseudomonas aeruginosa (strain UCBPP-PA14)).